The sequence spans 982 residues: Protein cramped (982 aa).

5 disordered regions span residues 1-37 (MEEL…GGGA), 71-111 (QKMK…GSGK), 323-349 (SLPS…ASLD), 407-456 (NKRL…SSGD), and 822-851 (GTSS…QEPG). Over residues 7–20 (QPPPPPLTQPPPPS) the composition is skewed to pro residues. Over residues 21–30 (SSVSIEEPLP) the composition is skewed to low complexity. Over residues 86 to 98 (SEREPNKKEEKAA) the composition is skewed to basic and acidic residues. The segment covering 100–111 (KTPSQLKTGSGK) has biased composition (polar residues). The region spanning 109–173 (SGKTTWTNVE…HYYQTHHKIC (65 aa)) is the SANT domain. The span at 410-425 (LRTESGSEKRSPETKK) shows a compositional bias: basic and acidic residues. 2 positions are modified to phosphoserine: serine 431 and serine 437. Residues 822 to 833 (GTSSAGISTSGS) show a composition bias toward low complexity.

The protein belongs to the cramped family. As to expression, ubiquitously expressed throughout embryonic development. High expression is detected in CNS and gonads.

It localises to the nucleus. In terms of biological role, polycomb group (Pc-G) genes are needed to maintain expression patterns of the homeotic selector genes of the Antennapedia (Antp-C) and Bithorax (Bx-C) complexes, and hence for the maintenance of segmental determination. Can act as a modifier of position effect variegation (PEV). This is Protein cramped (crm) from Drosophila melanogaster (Fruit fly).